A 113-amino-acid chain; its full sequence is Carboxysome shell protein CcmK1 (113 aa).

In terms of domain architecture, BMC spans 4 to 90 (AVGMIETLGF…PHENLEYVLP (87 aa)).

The protein belongs to the bacterial microcompartments protein family. CcmK subfamily. Homohexamer. Interacts preferentially with CcmK2 and CcmK4a rather than itself in vitro.

It localises to the carboxysome. Functionally, one of the shell proteins of the carboxysome, a polyhedral inclusion where RuBisCO (ribulose bisphosphate carboxylase, rbcL-rbcS) is sequestered. Assembles into hexamers which make sheets that form the facets of the polyhedral carboxysome. The hexamer central pore probably regulates metabolite flux. In Thermosynechococcus vestitus (strain NIES-2133 / IAM M-273 / BP-1), this protein is Carboxysome shell protein CcmK1.